The chain runs to 118 residues: Ferredoxin-thioredoxin reductase, catalytic chain (118 aa).

Cys56 serves as a coordination point for [4Fe-4S] cluster. The active-site Nucleophile is Cys58. Residues Cys58 and Cys88 are joined by a disulfide bond. [4Fe-4S] cluster-binding residues include Cys75, Cys77, and Cys86.

This sequence belongs to the ferredoxin thioredoxin reductase beta subunit family. As to quaternary structure, heterodimer of subunit A (variable subunit) and subunit B (catalytic subunit). Heterodimeric FTR forms a complex with ferredoxin and thioredoxin. [4Fe-4S] cluster serves as cofactor.

The catalysed reaction is [thioredoxin]-disulfide + 2 reduced [2Fe-2S]-[ferredoxin] + 2 H(+) = [thioredoxin]-dithiol + 2 oxidized [2Fe-2S]-[ferredoxin]. Catalytic subunit of the ferredoxin-thioredoxin reductase (FTR), which catalyzes the two-electron reduction of thioredoxins by the electrons provided by reduced ferredoxin. The sequence is that of Ferredoxin-thioredoxin reductase, catalytic chain from Synechocystis sp. (strain ATCC 27184 / PCC 6803 / Kazusa).